The chain runs to 254 residues: Acetylglutamate kinase (254 aa).

Substrate-binding positions include 40-41 (GG), arginine 62, and asparagine 154.

This sequence belongs to the acetylglutamate kinase family. ArgB subfamily.

It localises to the cytoplasm. The enzyme catalyses N-acetyl-L-glutamate + ATP = N-acetyl-L-glutamyl 5-phosphate + ADP. It functions in the pathway amino-acid biosynthesis; L-arginine biosynthesis; N(2)-acetyl-L-ornithine from L-glutamate: step 2/4. Functionally, catalyzes the ATP-dependent phosphorylation of N-acetyl-L-glutamate. This Staphylococcus aureus (strain Mu3 / ATCC 700698) protein is Acetylglutamate kinase.